The sequence spans 718 residues: Polyribonucleotide nucleotidyltransferase (718 aa).

2 residues coordinate Mg(2+): Asp-497 and Asp-503. The region spanning Pro-564–Ile-623 is the KH domain. One can recognise an S1 motif domain in the interval Gly-633–Leu-701.

Belongs to the polyribonucleotide nucleotidyltransferase family. As to quaternary structure, interacts with RNase E (rne). It depends on Mg(2+) as a cofactor.

The protein localises to the cytoplasm. It catalyses the reaction RNA(n+1) + phosphate = RNA(n) + a ribonucleoside 5'-diphosphate. Involved in mRNA degradation. Catalyzes the phosphorolysis of single-stranded polyribonucleotides processively in the 3'- to 5'-direction. This is Polyribonucleotide nucleotidyltransferase from Synechocystis sp. (strain ATCC 27184 / PCC 6803 / Kazusa).